The following is a 360-amino-acid chain: Phosphate acyltransferase (360 aa).

This sequence belongs to the PlsX family. As to quaternary structure, homodimer. Probably interacts with PlsY.

It is found in the cytoplasm. It catalyses the reaction a fatty acyl-[ACP] + phosphate = an acyl phosphate + holo-[ACP]. Its pathway is lipid metabolism; phospholipid metabolism. Catalyzes the reversible formation of acyl-phosphate (acyl-PO(4)) from acyl-[acyl-carrier-protein] (acyl-ACP). This enzyme utilizes acyl-ACP as fatty acyl donor, but not acyl-CoA. The protein is Phosphate acyltransferase of Caulobacter vibrioides (strain ATCC 19089 / CIP 103742 / CB 15) (Caulobacter crescentus).